Reading from the N-terminus, the 446-residue chain is Chromogranin-A (446 aa).

Positions 1 to 16 are cleaved as a signal peptide; it reads SAAALALLLCAGQVIA. A disulfide bond links Cys-33 and Cys-54. Residues 85–426 form a disordered region; the sequence is AKERSHQQKK…RPEDQELESL (342 aa). A Phosphoserine modification is found at Ser-97. The span at 105 to 138 shows a compositional bias: basic and acidic residues; sequence VLEKQNDQAELKEGTEEASSKEAAEKRGDSKEVE. Positions 160–171 are enriched in acidic residues; that stretch reads EAEDQTPGEEEA. The residue at position 209 (Ser-209) is a Phosphoserine. Over residues 226-243 the composition is skewed to basic and acidic residues; that stretch reads AGEKAVPEEEGPRSEAFD. Ser-286 carries the post-translational modification Phosphoserine. Gly-304 carries the glycine amide modification. Ser-319 carries the post-translational modification Phosphoserine. Residues 319-346 show a composition bias toward basic and acidic residues; the sequence is SEEWENAKRWSKMDRLAKELTAEKRLQG. The span at 347-357 shows a compositional bias: acidic residues; the sequence is EEEEEEEEEDP. Residue Ser-360 is modified to Phosphoserine. The residue at position 361 (Met-361) is a Methionine sulfoxide. Phosphoserine is present on residues Ser-387, Ser-391, Ser-413, and Ser-427. Basic and acidic residues predominate over residues 403–420; sequence YLEEKKEEEGSANRRPED. A glycan (O-linked (Xyl...) (chondroitin sulfate) serine) is linked at Ser-413.

This sequence belongs to the chromogranin/secretogranin protein family. In terms of assembly, self-interacts; self-assembly is promoted in vitro by chondroitin sulfate attachment which occurs at mildly acidic pH conditions. Interacts with SCG3. Interacts with ITPR1 in the secretory granules. Post-translationally, O-glycosylated; contains chondroitin sulfate (CS). CS attachment is pH-dependent, being observed at mildly acidic conditions of pH 5 but not at neutral pH, and promotes self-assembly in vitro. In terms of processing, parathyroid CHGA is sulfated on tyrosine residues, whereas adrenal CHGA seems to be mainly sulfated on oligosaccharide residues.

Its subcellular location is the secreted. It is found in the cytoplasmic vesicle. It localises to the secretory vesicle. The protein localises to the neuronal dense core vesicle. Its function is as follows. Strongly inhibits glucose induced insulin release from the pancreas. Functionally, inhibits low calcium-stimulated parathyroid cell secretion. In terms of biological role, inhibits catecholamine release from chromaffin cells and noradrenergic neurons by acting as a non-competitive nicotinic cholinergic antagonist. Can induce mast cell migration, degranulation and production of cytokines and chemokines. Regulates granule biogenesis in endocrine cells by up-regulating the transcription of protease nexin 1 (SERPINE2) via a cAMP-PKA-SP1 pathway. This leads to inhibition of granule protein degradation in the Golgi complex which in turn promotes granule formation. The chain is Chromogranin-A (CHGA) from Sus scrofa (Pig).